Reading from the N-terminus, the 279-residue chain is Large ribosomal subunit protein uL5c (279 aa).

2 disordered regions span residues 1–23 and 40–63; these read MAATAVTLPSSPAPFPVTTTASS and LRVAASAAADAPPKPAPPPTSPSG. Residues 1–43 constitute a chloroplast transit peptide; that stretch reads MAATAVTLPSSPAPFPVTTTASSSRNVRLLLRSPPPRRALRVA. Over residues 41-50 the composition is skewed to low complexity; it reads RVAASAAADA. Positions 51-60 are enriched in pro residues; sequence PPKPAPPPTS.

Belongs to the universal ribosomal protein uL5 family. As to quaternary structure, part of the 50S ribosomal subunit; contacts the 5S rRNA.

It localises to the plastid. Its subcellular location is the chloroplast. In terms of biological role, binds 5S rRNA, forms part of the central protuberance of the 50S subunit. The protein is Large ribosomal subunit protein uL5c (RPL5) of Oryza sativa subsp. japonica (Rice).